Here is a 102-residue protein sequence, read N- to C-terminus: NADH-quinone oxidoreductase subunit K 1 (102 aa).

3 consecutive transmembrane segments (helical) span residues leucine 5 to leucine 25, isoleucine 31 to phenylalanine 51, and leucine 65 to phenylalanine 85.

The protein belongs to the complex I subunit 4L family. As to quaternary structure, NDH-1 is composed of 14 different subunits. Subunits NuoA, H, J, K, L, M, N constitute the membrane sector of the complex.

It is found in the cell inner membrane. It catalyses the reaction a quinone + NADH + 5 H(+)(in) = a quinol + NAD(+) + 4 H(+)(out). NDH-1 shuttles electrons from NADH, via FMN and iron-sulfur (Fe-S) centers, to quinones in the respiratory chain. The immediate electron acceptor for the enzyme in this species is believed to be ubiquinone. Couples the redox reaction to proton translocation (for every two electrons transferred, four hydrogen ions are translocated across the cytoplasmic membrane), and thus conserves the redox energy in a proton gradient. This is NADH-quinone oxidoreductase subunit K 1 from Rhizobium etli (strain ATCC 51251 / DSM 11541 / JCM 21823 / NBRC 15573 / CFN 42).